Consider the following 841-residue polypeptide: ATP-dependent helicase Lhr-Core (841 aa).

Residues Gln-39, Lys-62, Thr-63, Asp-181, Glu-182, Ile-352, Arg-369, and His-372 each coordinate ATP. The Helicase ATP-binding domain maps to 43 to 234 (IKEIHEGKNV…FLVGNGRDCY (192 aa)). The short motif at 181–184 (DEIH) is the DEVH box element. Residues 266–416 (RLYNLLKKLI…RIHIPKNCLD (151 aa)) form the Helicase C-terminal domain. The tract at residues 417-500 (VLAQHLVGMA…IYYMNVGTIP (84 aa)) is WH domain. Residues 501 to 841 (DETAVDVIAD…MEFISMKGKK (341 aa)) form a domain 4 region.

Belongs to the Lhr helicase family. Lhr-Core subfamily. As to quaternary structure, monomer.

The enzyme catalyses Couples ATP hydrolysis with the unwinding of duplex DNA by translocating in the 3'-5' direction.. It catalyses the reaction ATP + H2O = ADP + phosphate + H(+). Its function is as follows. DNA helicase that loads on single-stranded (ss)DNA and translocates in a 3'-5' direction, probably involved in DNA repair. Archaeal orthologs have double-stranded (ds)DNA and/or RNA:DNA helicase activity. The polypeptide is ATP-dependent helicase Lhr-Core (Methanocaldococcus jannaschii (strain ATCC 43067 / DSM 2661 / JAL-1 / JCM 10045 / NBRC 100440) (Methanococcus jannaschii)).